The primary structure comprises 375 residues: Heat shock protein 42 (375 aa).

4 disordered regions span residues 21–59, 81–127, 154–238, and 347–375; these read TGQR…HPLY, SPEY…YYHC, PYEG…ETRM, and PKPK…TVEN. Over residues 22–48 the composition is skewed to low complexity; the sequence is GQRGQQGYPRQPQRPQRYHPHYGQVHV. Residues 49–58 are compositionally biased toward basic residues; the sequence is GGHHPRHHPL. 2 stretches are compositionally biased toward acidic residues: residues 85–101 and 158–168; these read GYDD…EDMV and TEPEIEANTEQ. The span at 169–197 shows a compositional bias: basic and acidic residues; the sequence is EGEKGEEKDKKDKSEAPKEEAGETNKEKP. S182, S213, S214, S215, and S223 each carry phosphoserine. Residues 237-356 form the sHSP domain; the sequence is RMDLPFSPEV…PKPKKRIAIE (120 aa). Positions 357–367 are enriched in acidic residues; it reads EIPDEELEFEE.

This sequence belongs to the small heat shock protein (HSP20) family. Forms oligomeric complexes. Interacts with itself.

The polypeptide is Heat shock protein 42 (HSP42) (Saccharomyces cerevisiae (strain ATCC 204508 / S288c) (Baker's yeast)).